A 118-amino-acid chain; its full sequence is MARLAVAIAVVAAVVVVLAATTSEAAISCGQVSSAIALCLSYARGQGFAPSAGCCSGVRSLNSAARTTADRRAACNCLKNAARGISGLNAGNAASIPSKCGVSVPYTISTSTDCSRVS.

Residues 1–20 (MARLAVAIAVVAAVVVVLAA) form the signal peptide. 4 cysteine pairs are disulfide-bonded: Cys29-Cys77, Cys39-Cys54, Cys55-Cys100, and Cys75-Cys114.

Belongs to the plant LTP family.

In terms of biological role, plant non-specific lipid-transfer proteins transfer phospholipids as well as galactolipids across membranes. May play a role in wax or cutin deposition in the cell walls of expanding epidermal cells and certain secretory tissues. This is Non-specific lipid-transfer protein 1 (LTP1) from Sorghum bicolor (Sorghum).